We begin with the raw amino-acid sequence, 854 residues long: Probable inorganic carbon transporter subunit DabA (854 aa).

Zn(2+) contacts are provided by cysteine 378, aspartate 380, histidine 560, and cysteine 575.

This sequence belongs to the inorganic carbon transporter (TC 9.A.2) DabA family. Forms a complex with DabB. Zn(2+) is required as a cofactor.

The protein resides in the cell membrane. In terms of biological role, part of an energy-coupled inorganic carbon pump. This chain is Probable inorganic carbon transporter subunit DabA, found in Bacillus cereus (strain ATCC 14579 / DSM 31 / CCUG 7414 / JCM 2152 / NBRC 15305 / NCIMB 9373 / NCTC 2599 / NRRL B-3711).